A 176-amino-acid polypeptide reads, in one-letter code: Nascent polypeptide-associated complex subunit alpha (176 aa).

The NAC-A/B domain maps to 14–78 (SKNEKKAREL…AKVDDFTQRL (65 aa)). A disordered region spans residues 85 to 127 (LQQNEGVLPAGQDAVSKDPQSIQADMQAAADSATDKPSADDAV). The 40-residue stretch at 137–176 (LNADDIELVMQQAGVPRAKAAKALKEHDSDIVNAIMALSG) folds into the UBA domain.

This sequence belongs to the NAC-alpha family. In terms of assembly, part of the nascent polypeptide-associated complex (NAC), consisting of EGD2 and EGD1. NAC associates with ribosomes via EGD1.

Its subcellular location is the cytoplasm. The protein localises to the nucleus. Its function is as follows. Component of the nascent polypeptide-associated complex (NAC), a dynamic component of the ribosomal exit tunnel, protecting the emerging polypeptides from interaction with other cytoplasmic proteins to ensure appropriate nascent protein targeting. The NAC complex also promotes mitochondrial protein import by enhancing productive ribosome interactions with the outer mitochondrial membrane and blocks the inappropriate interaction of ribosomes translating non-secretory nascent polypeptides with translocation sites in the membrane of the endoplasmic reticulum. EGD2 may also be involved in transcription regulation. The polypeptide is Nascent polypeptide-associated complex subunit alpha (EGD2) (Kluyveromyces lactis (strain ATCC 8585 / CBS 2359 / DSM 70799 / NBRC 1267 / NRRL Y-1140 / WM37) (Yeast)).